Here is a 57-residue protein sequence, read N- to C-terminus: Large ribosomal subunit protein bL32 (57 aa).

Positions 1–23 (MAVPARHTSSAKKNRRRTHYKLT) are disordered. Residues 9 to 20 (SSAKKNRRRTHY) show a composition bias toward basic residues.

This sequence belongs to the bacterial ribosomal protein bL32 family.

The chain is Large ribosomal subunit protein bL32 from Lactococcus lactis subsp. cremoris (strain MG1363).